Reading from the N-terminus, the 171-residue chain is uncharacterized protein (171 aa).

The signal sequence occupies residues 1–20; it reads MRDFYLFLGAVFLLVLGVWA.

This is an uncharacterized protein from Aquifex aeolicus (strain VF5).